Reading from the N-terminus, the 128-residue chain is Large ribosomal subunit protein bL20 (128 aa).

This sequence belongs to the bacterial ribosomal protein bL20 family.

Its function is as follows. Binds directly to 23S ribosomal RNA and is necessary for the in vitro assembly process of the 50S ribosomal subunit. It is not involved in the protein synthesizing functions of that subunit. The chain is Large ribosomal subunit protein bL20 from Kocuria rhizophila (strain ATCC 9341 / DSM 348 / NBRC 103217 / DC2201).